A 100-amino-acid chain; its full sequence is NADH-quinone oxidoreductase subunit K (100 aa).

3 helical membrane-spanning segments follow: residues 2-22 (IPLS…VAGF), 28-48 (IIVM…NLVA), and 64-84 (FVIT…ICLF).

This sequence belongs to the complex I subunit 4L family. As to quaternary structure, NDH-1 is composed of 14 different subunits. Subunits NuoA, H, J, K, L, M, N constitute the membrane sector of the complex.

It localises to the cell inner membrane. It carries out the reaction a quinone + NADH + 5 H(+)(in) = a quinol + NAD(+) + 4 H(+)(out). NDH-1 shuttles electrons from NADH, via FMN and iron-sulfur (Fe-S) centers, to quinones in the respiratory chain. The immediate electron acceptor for the enzyme in this species is believed to be ubiquinone. Couples the redox reaction to proton translocation (for every two electrons transferred, four hydrogen ions are translocated across the cytoplasmic membrane), and thus conserves the redox energy in a proton gradient. This Desulfovibrio desulfuricans (strain ATCC 27774 / DSM 6949 / MB) protein is NADH-quinone oxidoreductase subunit K.